A 204-amino-acid polypeptide reads, in one-letter code: Peptide chain release factor homolog (204 aa).

Positions 2–98 are rRNA-recognition domain, N-terminus; the sequence is ILLQLSSAQG…KNWFLGIGRF (97 aa). A linker 1 region spans residues 99-107; that stretch reads TADEQEQSD. A GGQ domain region spans residues 108–161; it reads AIRYETLRSSGPGGQHVNKTDSAVRATHLASGISVKVQSERSQHANKRLARLLI. Residues 120-122 carry the GGQ motif motif; the sequence is GGQ. The segment at 162 to 179 is linker 2; sequence AWKLEQQQQENSAALKSQ. Residues 180–204 form an rRNA-recognition domain, C-terminus region; it reads RRMFHHQIERGNPRRTFTGMAFIEG.

Belongs to the prokaryotic/mitochondrial release factor family. Found in the A site of damaged 70S ribosomes, but not in undamaged ribosomes. Contacts (damaged) 16S rRNA, 23S rRNA and ribosomal protein uS12, but not mRNA.

Peptide chain release-like factor that acts on 70S ribosomes with specific damage to their decoding center (cleavage of 16S rRNA between adenine-1493 and guanosine-1494, E.coli 16S rRNA numbering). Probably acts as a peptidyl-tRNA hydrolase, allowing release of the nascent chain and dissociation of the 30S and 50S subunits. Can release mRNA as short as 19 nucleotides (nt, mRNA-19, which has a single amino acid in the P-site and only a single nt in the A-site) from the ribosome. This specific cleavage is inflicted by CdiA (ECL_04451) or by colicin E3-type (ColE3) proteins. In vivo the PrfH-RtcB2 pair restores growth in the presence of ribotoxins that specifically create this damage. This Escherichia coli (strain ATCC 25922 / DSM 1103 / LMG 8223 / NCIMB 12210 / NCTC 12241 / WDCM 00013 / Seattle 1946) protein is Peptide chain release factor homolog.